The following is a 477-amino-acid chain: Asparaginyl-tRNA synthetase (477 aa).

A mitochondrion-targeting transit peptide spans 1-14 (MLGVRCLLRSVRFC). N6-acetyllysine is present on Lys-353.

The protein belongs to the class-II aminoacyl-tRNA synthetase family. Homodimer.

It localises to the mitochondrion matrix. The protein localises to the mitochondrion. It catalyses the reaction tRNA(Asn) + L-asparagine + ATP = L-asparaginyl-tRNA(Asn) + AMP + diphosphate + H(+). Functionally, mitochondrial aminoacyl-tRNA synthetase that catalyzes the specific attachment of the asparagine amino acid (aa) to the homologous transfer RNA (tRNA), further participating in protein synthesis. The reaction occurs in a two steps: asparagine is first activated by ATP to form Asn-AMP and then transferred to the acceptor end of tRNA(Asn). The protein is Asparaginyl-tRNA synthetase of Homo sapiens (Human).